Reading from the N-terminus, the 309-residue chain is Taste receptor type 2 member 114 (309 aa).

Residues 1–7 (MLGAMEG) lie on the Extracellular side of the membrane. A helical transmembrane segment spans residues 8–28 (VLLSVATSEALLGIVGNTFIA). Topologically, residues 29-43 (LVNCMDCTRNKNLYN) are cytoplasmic. A helical membrane pass occupies residues 44 to 64 (IGFILTGLAISRICLVWILIT). Over 65–87 (EAYIKIFSPQLLSPINIIELISY) the chain is Extracellular. A helical membrane pass occupies residues 88–108 (LWIITSQLNVWFATSLSIFYF). Topologically, residues 109-127 (LKIANFSHHIFLWLKRRIN) are cytoplasmic. The chain crosses the membrane as a helical span at residues 128–148 (IVFAFLIGCLLMSWLFSFPVV). At 149 to 182 (VKMVKDKKMLYINSSWQIHMKKSELIINYVFTNG) the chain is on the extracellular side. N161 is a glycosylation site (N-linked (GlcNAc...) asparagine). The helical transmembrane segment at 183-203 (GVFLLFIIMLIVCFLLIISLW) threads the bilayer. Residues 204–233 (RHSKWMQSNESGFRDLNTEVHVKTIKVLLS) lie on the Cytoplasmic side of the membrane. Residues 234–254 (FIILFILHLIGITINVICLLV) traverse the membrane as a helical segment. Residues 255 to 259 (PENNL) are Extracellular-facing. A helical transmembrane segment spans residues 260–280 (LFVFGLTIAFLYPCCHSLILI). Over 281-309 (LANSRLKRCFVRILQQLMCSEEGKEFRNT) the chain is Cytoplasmic.

This sequence belongs to the G-protein coupled receptor T2R family.

It is found in the membrane. In terms of biological role, putative taste receptor which may play a role in the perception of bitterness. The polypeptide is Taste receptor type 2 member 114 (Rattus norvegicus (Rat)).